The sequence spans 66 residues: Small ribosomal subunit protein eS27 (66 aa).

Residues Cys-21, Cys-24, Cys-40, and Cys-43 each contribute to the Zn(2+) site. The C4-type zinc finger occupies 21 to 43 (CPNCGNEQTVFSHATFPVRCLSC).

The protein belongs to the eukaryotic ribosomal protein eS27 family. As to quaternary structure, part of the 30S ribosomal subunit. Zn(2+) serves as cofactor.

This is Small ribosomal subunit protein eS27 from Sulfurisphaera tokodaii (strain DSM 16993 / JCM 10545 / NBRC 100140 / 7) (Sulfolobus tokodaii).